The primary structure comprises 466 residues: MEVMPQPLTIVILAAGLGTRMKSRHAKVLHQAGGKTLLQHVIDTALELAPAERIFVVVGHQAEKVRQSVTTPGIGFIEQTEQKGTGHAVLIGRHALAGLDGHLMVLYGDCPLLRTETLRRLIAQAAEGPAAGVLLSAMMDDPYGYGRVIRDSRGHVLDVVEQKSGTPEQLAIKEANMGIYCFRAGLFWEHVGEIEPNNPAGEYYLTDMPAILHRAGHTVEAMRIDDPAEALGINDRAQLAEVDRIFRDRKRRAVMAAGVTLIQPETITIDPAAEIGQDSIIESFAQILGKTKIGENCRVGSCSIVSDSTLADEVHIGAFTIVTTSVLEHGVHAGPYARLRMENHVEAGAHIGNFVELKKTRMGKGAKANHLAYLGDSEIGARVNIGAGTITCNYDGFKKHRTGIGEGAFVGSNSTLVAPIDIGEGAYVAAGSVITNPVPPDALALGRARQEIKEEWAKKRRKLAKT.

Residues 1–236 are pyrophosphorylase; sequence MEVMPQPLTI…PAEALGINDR (236 aa). Residues 13 to 16, lysine 27, glutamine 79, 84 to 85, 107 to 109, glycine 146, glutamate 161, asparagine 176, and asparagine 234 contribute to the UDP-N-acetyl-alpha-D-glucosamine site; these read LAAG, GT, and YGD. Aspartate 109 provides a ligand contact to Mg(2+). Asparagine 234 is a binding site for Mg(2+). Positions 237–257 are linker; the sequence is AQLAEVDRIFRDRKRRAVMAA. The tract at residues 258–466 is N-acetyltransferase; it reads GVTLIQPETI…AKKRRKLAKT (209 aa). UDP-N-acetyl-alpha-D-glucosamine-binding residues include arginine 340 and lysine 358. The active-site Proton acceptor is the histidine 370. UDP-N-acetyl-alpha-D-glucosamine-binding residues include tyrosine 373 and asparagine 384. Acetyl-CoA is bound by residues alanine 387, 393–394, serine 412, alanine 430, and arginine 447; that span reads NY.

The protein in the N-terminal section; belongs to the N-acetylglucosamine-1-phosphate uridyltransferase family. It in the C-terminal section; belongs to the transferase hexapeptide repeat family. Homotrimer. The cofactor is Mg(2+).

It localises to the cytoplasm. The enzyme catalyses alpha-D-glucosamine 1-phosphate + acetyl-CoA = N-acetyl-alpha-D-glucosamine 1-phosphate + CoA + H(+). It carries out the reaction N-acetyl-alpha-D-glucosamine 1-phosphate + UTP + H(+) = UDP-N-acetyl-alpha-D-glucosamine + diphosphate. It functions in the pathway nucleotide-sugar biosynthesis; UDP-N-acetyl-alpha-D-glucosamine biosynthesis; N-acetyl-alpha-D-glucosamine 1-phosphate from alpha-D-glucosamine 6-phosphate (route II): step 2/2. The protein operates within nucleotide-sugar biosynthesis; UDP-N-acetyl-alpha-D-glucosamine biosynthesis; UDP-N-acetyl-alpha-D-glucosamine from N-acetyl-alpha-D-glucosamine 1-phosphate: step 1/1. Its pathway is bacterial outer membrane biogenesis; LPS lipid A biosynthesis. Functionally, catalyzes the last two sequential reactions in the de novo biosynthetic pathway for UDP-N-acetylglucosamine (UDP-GlcNAc). The C-terminal domain catalyzes the transfer of acetyl group from acetyl coenzyme A to glucosamine-1-phosphate (GlcN-1-P) to produce N-acetylglucosamine-1-phosphate (GlcNAc-1-P), which is converted into UDP-GlcNAc by the transfer of uridine 5-monophosphate (from uridine 5-triphosphate), a reaction catalyzed by the N-terminal domain. The sequence is that of Bifunctional protein GlmU from Solibacter usitatus (strain Ellin6076).